The following is an 86-amino-acid chain: Small ribosomal subunit protein bS16 (86 aa).

This sequence belongs to the bacterial ribosomal protein bS16 family.

The sequence is that of Small ribosomal subunit protein bS16 from Nostoc punctiforme (strain ATCC 29133 / PCC 73102).